The sequence spans 445 residues: Homoserine dehydrogenase (445 aa).

3 residues coordinate NADPH: F26, T28, and V29. Residues V29 and A58 each coordinate NAD(+). V29 provides a ligand contact to NADP(+). K119 serves as a coordination point for NADPH. K119 provides a ligand contact to NADP(+). Na(+)-binding residues include E143, V146, G148, and I150. The NADP(+) site is built by G201 and E204. Residues E204 and D215 each coordinate L-homoserine. The active-site Proton donor is K219. G321 is a binding site for NADPH. G321 contributes to the NAD(+) binding site. G321 is an NADP(+) binding site. The ACT domain occupies 368-445 (HLDMDVEDRV…INSVIRLERD (78 aa)).

The protein belongs to the homoserine dehydrogenase family. The cofactor is a metal cation.

The catalysed reaction is L-homoserine + NADP(+) = L-aspartate 4-semialdehyde + NADPH + H(+). The enzyme catalyses L-homoserine + NAD(+) = L-aspartate 4-semialdehyde + NADH + H(+). It functions in the pathway amino-acid biosynthesis; L-methionine biosynthesis via de novo pathway; L-homoserine from L-aspartate: step 3/3. The protein operates within amino-acid biosynthesis; L-threonine biosynthesis; L-threonine from L-aspartate: step 3/5. Its activity is regulated as follows. Feedback inhibition by threonine. Functionally, catalyzes the conversion of L-aspartate-beta-semialdehyde (L-Asa) to L-homoserine (L-Hse), the third step in the biosynthesis of threonine and methionine from aspartate. The protein is Homoserine dehydrogenase (hom) of Corynebacterium glutamicum (strain ATCC 13032 / DSM 20300 / JCM 1318 / BCRC 11384 / CCUG 27702 / LMG 3730 / NBRC 12168 / NCIMB 10025 / NRRL B-2784 / 534).